Here is a 449-residue protein sequence, read N- to C-terminus: Chromosomal replication initiator protein DnaA (449 aa).

The interval 1-72 is domain I, interacts with DnaA modulators; it reads MPNLEELWAY…VEGVYEFAQL (72 aa). The interval 72–109 is domain II; the sequence is LEVDPVIMTKDELQPAPATDQRPAVEEDDQNLTFKAKT. A domain III, AAA+ region region spans residues 110–326; it reads HLNPKYTFDH…GALVRVQAFS (217 aa). The ATP site is built by Gly154, Gly156, Lys157, and Thr158. The domain IV, binds dsDNA stretch occupies residues 327 to 449; sequence TMKNEDITTS…ELRNILKNRG (123 aa).

Belongs to the DnaA family. In terms of assembly, oligomerizes as a right-handed, spiral filament on DNA at oriC.

Its subcellular location is the cytoplasm. In terms of biological role, plays an essential role in the initiation and regulation of chromosomal replication. ATP-DnaA binds to the origin of replication (oriC) to initiate formation of the DNA replication initiation complex once per cell cycle. Binds the DnaA box (a 9 base pair repeat at the origin) and separates the double-stranded (ds)DNA. Forms a right-handed helical filament on oriC DNA; dsDNA binds to the exterior of the filament while single-stranded (ss)DNA is stabiized in the filament's interior. The ATP-DnaA-oriC complex binds and stabilizes one strand of the AT-rich DNA unwinding element (DUE), permitting loading of DNA polymerase. After initiation quickly degrades to an ADP-DnaA complex that is not apt for DNA replication. Binds acidic phospholipids. The chain is Chromosomal replication initiator protein DnaA from Lacticaseibacillus paracasei (strain ATCC 334 / BCRC 17002 / CCUG 31169 / CIP 107868 / KCTC 3260 / NRRL B-441) (Lactobacillus paracasei).